Here is an 831-residue protein sequence, read N- to C-terminus: Phenylalanine--tRNA ligase beta subunit (831 aa).

One can recognise a tRNA-binding domain in the interval 44 to 155 (GPVDGPVTVG…GAAEPGADGA (112 aa)). The region spanning 414–489 (WSPPPIRMGV…RLEGLEVIPS (76 aa)) is the B5 domain. Positions 467, 473, 476, and 477 each coordinate Mg(2+). One can recognise an FDX-ACB domain in the interval 737 to 830 (SPYPAVFQDV…AAERVGAVLR (94 aa)).

This sequence belongs to the phenylalanyl-tRNA synthetase beta subunit family. Type 1 subfamily. As to quaternary structure, tetramer of two alpha and two beta subunits. Mg(2+) serves as cofactor.

Its subcellular location is the cytoplasm. It carries out the reaction tRNA(Phe) + L-phenylalanine + ATP = L-phenylalanyl-tRNA(Phe) + AMP + diphosphate + H(+). The chain is Phenylalanine--tRNA ligase beta subunit (pheT) from Mycobacterium tuberculosis (strain ATCC 25618 / H37Rv).